Reading from the N-terminus, the 519-residue chain is Xylose import ATP-binding protein XylG (519 aa).

ABC transporter domains are found at residues 6–245 and 262–507; these read LTMR…VGRE and LEAR…LTPA. 38–45 provides a ligand contact to ATP; it reads GENGAGKS.

The protein belongs to the ABC transporter superfamily. Xylose importer (TC 3.A.1.2.4) family. The complex is composed of two ATP-binding proteins (XylG), two transmembrane proteins (XylH) and a solute-binding protein (XylF).

The protein localises to the cell inner membrane. It catalyses the reaction D-xylose(out) + ATP + H2O = D-xylose(in) + ADP + phosphate + H(+). Functionally, part of the ABC transporter complex XylFGH involved in xylose import. Responsible for energy coupling to the transport system. The chain is Xylose import ATP-binding protein XylG from Burkholderia ambifaria (strain ATCC BAA-244 / DSM 16087 / CCUG 44356 / LMG 19182 / AMMD) (Burkholderia cepacia (strain AMMD)).